A 133-amino-acid chain; its full sequence is Ribonuclease P protein component (133 aa).

This sequence belongs to the RnpA family. In terms of assembly, consists of a catalytic RNA component (M1 or rnpB) and a protein subunit.

The enzyme catalyses Endonucleolytic cleavage of RNA, removing 5'-extranucleotides from tRNA precursor.. Functionally, RNaseP catalyzes the removal of the 5'-leader sequence from pre-tRNA to produce the mature 5'-terminus. It can also cleave other RNA substrates such as 4.5S RNA. The protein component plays an auxiliary but essential role in vivo by binding to the 5'-leader sequence and broadening the substrate specificity of the ribozyme. The protein is Ribonuclease P protein component of Corynebacterium efficiens (strain DSM 44549 / YS-314 / AJ 12310 / JCM 11189 / NBRC 100395).